The primary structure comprises 273 residues: Hydroxyethylthiazole kinase (273 aa).

Position 49 (M49) interacts with substrate. ATP contacts are provided by R125 and T171. G198 is a substrate binding site.

Belongs to the Thz kinase family. Requires Mg(2+) as cofactor.

The catalysed reaction is 5-(2-hydroxyethyl)-4-methylthiazole + ATP = 4-methyl-5-(2-phosphooxyethyl)-thiazole + ADP + H(+). Its pathway is cofactor biosynthesis; thiamine diphosphate biosynthesis; 4-methyl-5-(2-phosphoethyl)-thiazole from 5-(2-hydroxyethyl)-4-methylthiazole: step 1/1. In terms of biological role, catalyzes the phosphorylation of the hydroxyl group of 4-methyl-5-beta-hydroxyethylthiazole (THZ). The protein is Hydroxyethylthiazole kinase of Desulforudis audaxviator (strain MP104C).